A 268-amino-acid polypeptide reads, in one-letter code: Ribosomal RNA small subunit methyltransferase A (268 aa).

S-adenosyl-L-methionine contacts are provided by Asn-18, Leu-20, Gly-45, Glu-66, Asp-91, and Asn-112.

The protein belongs to the class I-like SAM-binding methyltransferase superfamily. rRNA adenine N(6)-methyltransferase family. RsmA subfamily.

The protein localises to the cytoplasm. The catalysed reaction is adenosine(1518)/adenosine(1519) in 16S rRNA + 4 S-adenosyl-L-methionine = N(6)-dimethyladenosine(1518)/N(6)-dimethyladenosine(1519) in 16S rRNA + 4 S-adenosyl-L-homocysteine + 4 H(+). Its function is as follows. Specifically dimethylates two adjacent adenosines (A1518 and A1519) in the loop of a conserved hairpin near the 3'-end of 16S rRNA in the 30S particle. May play a critical role in biogenesis of 30S subunits. The protein is Ribosomal RNA small subunit methyltransferase A of Shewanella sp. (strain MR-7).